The sequence spans 589 residues: Phenylalanine--tRNA ligase beta subunit (589 aa).

The region spanning 302-379 (LAYRKEMVRA…IAYGYNNIQM (78 aa)) is the B5 domain. The Mg(2+) site is built by D357, D363, E366, and D367.

This sequence belongs to the phenylalanyl-tRNA synthetase beta subunit family. Type 2 subfamily. Heterotetramer; dimer of two heterodimers formed by FARSA and FARSB. It depends on Mg(2+) as a cofactor.

The protein localises to the cytoplasm. The catalysed reaction is tRNA(Phe) + L-phenylalanine + ATP = L-phenylalanyl-tRNA(Phe) + AMP + diphosphate + H(+). In Homo sapiens (Human), this protein is Phenylalanine--tRNA ligase beta subunit (FARSB).